Here is a 210-residue protein sequence, read N- to C-terminus: Redox-sensing transcriptional repressor Rex (210 aa).

The H-T-H motif DNA-binding region spans 17 to 56 (SYLHLVKKAEADKLEYISGTVIAEELELEPIQVRKDLTIT). 91-96 (GAGSLG) is an NAD(+) binding site.

This sequence belongs to the transcriptional regulatory Rex family. Homodimer.

It localises to the cytoplasm. Its function is as follows. Modulates transcription in response to changes in cellular NADH/NAD(+) redox state. This is Redox-sensing transcriptional repressor Rex from Treponema denticola (strain ATCC 35405 / DSM 14222 / CIP 103919 / JCM 8153 / KCTC 15104).